The sequence spans 501 residues: ATP synthase subunit alpha (501 aa).

169 to 176 (GDRQTGKT) contributes to the ATP binding site.

This sequence belongs to the ATPase alpha/beta chains family. F-type ATPases have 2 components, CF(1) - the catalytic core - and CF(0) - the membrane proton channel. CF(1) has five subunits: alpha(3), beta(3), gamma(1), delta(1), epsilon(1). CF(0) has three main subunits: a(1), b(2) and c(9-12). The alpha and beta chains form an alternating ring which encloses part of the gamma chain. CF(1) is attached to CF(0) by a central stalk formed by the gamma and epsilon chains, while a peripheral stalk is formed by the delta and b chains.

It is found in the cell membrane. The enzyme catalyses ATP + H2O + 4 H(+)(in) = ADP + phosphate + 5 H(+)(out). Functionally, produces ATP from ADP in the presence of a proton gradient across the membrane. The alpha chain is a regulatory subunit. The sequence is that of ATP synthase subunit alpha from Streptococcus equi subsp. zooepidemicus (strain H70).